A 345-amino-acid polypeptide reads, in one-letter code: Platelet-derived growth factor C (345 aa).

An N-terminal signal peptide occupies residues 1–22 (MLLFGFLLLTFALVSQRQGAEA). 2 N-linked (GlcNAc...) asparagine glycosylation sites follow: asparagine 25 and asparagine 55. The 118-residue stretch at 46 to 163 (HEKIITVSAN…PGFCIHYTLL (118 aa)) folds into the CUB domain. Intrachain disulfides connect cysteine 104/cysteine 124, cysteine 250/cysteine 294, cysteine 280/cysteine 335, and cysteine 287/cysteine 337.

Belongs to the PDGF/VEGF growth factor family. In terms of assembly, homodimer; disulfide-linked. Interacts with PDGFRA homodimers, and with heterodimers formed by PDGFRA and PDGFRB. In terms of processing, proteolytic removal of the N-terminal CUB domain releasing the core domain is necessary for unmasking the receptor-binding epitopes of the core domain. Cleavage after basic residues in the hinge region (region connecting the CUB and growth factor domains) gives rise to the receptor-binding form.

It localises to the secreted. Growth factor that plays an essential role in the regulation of embryonic development, cell proliferation, cell migration, survival and chemotaxis. Potent mitogen and chemoattractant for cells of mesenchymal origin. Required for normal skeleton formation during embryonic development. Required for normal skin morphogenesis during embryonic development. Plays an important role in wound healing, in angiogenesis and blood vessel development. The sequence is that of Platelet-derived growth factor C (PDGFC) from Gekko japonicus (Schlegel's Japanese gecko).